Reading from the N-terminus, the 369-residue chain is S-(hydroxymethyl)glutathione dehydrogenase (369 aa).

Zn(2+) is bound by residues Cys40, His62, Cys92, Cys95, Cys98, Cys106, and Cys169.

The protein belongs to the zinc-containing alcohol dehydrogenase family. Class-III subfamily. In terms of assembly, homodimer. Requires Zn(2+) as cofactor.

The protein localises to the cytoplasm. The catalysed reaction is S-(hydroxymethyl)glutathione + NADP(+) = S-formylglutathione + NADPH + H(+). It catalyses the reaction S-(hydroxymethyl)glutathione + NAD(+) = S-formylglutathione + NADH + H(+). The enzyme catalyses a primary alcohol + NAD(+) = an aldehyde + NADH + H(+). It carries out the reaction a secondary alcohol + NAD(+) = a ketone + NADH + H(+). The catalysed reaction is S-nitrosoglutathione + NADH + H(+) = S-(hydroxysulfenamide)glutathione + NAD(+). In terms of biological role, has high formaldehyde dehydrogenase activity in the presence of glutathione and catalyzes the oxidation of normal alcohols in a reaction that is not GSH-dependent. In addition, hemithiolacetals other than those formed from GSH, including omega-thiol fatty acids, also are substrates. Also acts as a S-nitroso-glutathione reductase by catalyzing the NADH-dependent reduction of S-nitrosoglutathione. This chain is S-(hydroxymethyl)glutathione dehydrogenase (frmA), found in Synechocystis sp. (strain ATCC 27184 / PCC 6803 / Kazusa).